A 64-amino-acid polypeptide reads, in one-letter code: uncharacterized protein (64 aa).

This is an uncharacterized protein from Enterobacteria phage T4 (Bacteriophage T4).